The sequence spans 314 residues: Epithelial cell adhesion molecule (314 aa).

The first 23 residues, 1-23, serve as a signal peptide directing secretion; sequence MAPPQVLAFGLLLAAATAAVAAA. The Extracellular segment spans residues 24–265; sequence QQGCVCENYK…PPEFSMQGLQ (242 aa). 6 disulfides stabilise this stretch: Cys-27/Cys-46, Cys-29/Cys-59, Cys-38/Cys-48, Cys-66/Cys-99, Cys-110/Cys-116, and Cys-118/Cys-135. The N-linked (GlcNAc...) asparagine glycan is linked to Asn-37. The region spanning 63–135 is the Thyroglobulin type-1 domain; it reads ASKCLVMKAE…RTDKDSEISC (73 aa). Residue Asn-111 is glycosylated (N-linked (GlcNAc...) asparagine). A glycan (N-linked (GlcNAc...) asparagine) is linked at Asn-198. The helical transmembrane segment at 266–288 threads the bilayer; sequence AGIIAVIAVVAIAIVAGIIVLIV. The Cytoplasmic portion of the chain corresponds to 289–314; sequence STKKRRAKYEKAEIKEMGEMHRELNA.

The protein belongs to the EPCAM family. As to quaternary structure, monomer. Interacts with phosphorylated CLDN7. Post-translationally, glycosylation at Asn-198 is crucial for protein stability.

The protein resides in the lateral cell membrane. It is found in the cell junction. The protein localises to the tight junction. May act as a physical homophilic interaction molecule between intestinal epithelial cells (IECs) and intraepithelial lymphocytes (IELs) at the mucosal epithelium for providing immunological barrier as a first line of defense against mucosal infection. Plays a role in embryonic stem cells proliferation and differentiation. Up-regulates the expression of FABP5, MYC and cyclins A and E. This is Epithelial cell adhesion molecule (TACSTD1) from Sus scrofa (Pig).